We begin with the raw amino-acid sequence, 502 residues long: Glycerol kinase (502 aa).

T14 serves as a coordination point for ADP. The ATP site is built by T14, T15, and S16. T14 serves as a coordination point for sn-glycerol 3-phosphate. An ADP-binding site is contributed by R18. Sn-glycerol 3-phosphate contacts are provided by R84, E85, Y136, and D246. Residues R84, E85, Y136, D246, and Q247 each coordinate glycerol. ADP contacts are provided by T268 and G311. Residues T268, G311, Q315, and G412 each coordinate ATP. Residues G412 and N416 each coordinate ADP.

The protein belongs to the FGGY kinase family. In terms of assembly, homotetramer and homodimer (in equilibrium). Heterodimer with EIIA-Glc. Binds 1 zinc ion per glycerol kinase EIIA-Glc dimer. The zinc ion is important for dimerization.

The catalysed reaction is glycerol + ATP = sn-glycerol 3-phosphate + ADP + H(+). The protein operates within polyol metabolism; glycerol degradation via glycerol kinase pathway; sn-glycerol 3-phosphate from glycerol: step 1/1. Activity of this regulatory enzyme is affected by several metabolites. Allosterically and non-competitively inhibited by fructose 1,6-bisphosphate (FBP) and unphosphorylated phosphocarrier protein EIIA-Glc (III-Glc), an integral component of the bacterial phosphotransferase (PTS) system. Functionally, key enzyme in the regulation of glycerol uptake and metabolism. Catalyzes the phosphorylation of glycerol to yield sn-glycerol 3-phosphate. The protein is Glycerol kinase of Escherichia coli O7:K1 (strain IAI39 / ExPEC).